The sequence spans 444 residues: Tol-Pal system protein TolB (444 aa).

The N-terminal stretch at 1–19 (MRNIIYFILLLLFSFKGYA) is a signal peptide.

Belongs to the TolB family. As to quaternary structure, the Tol-Pal system is composed of five core proteins: the inner membrane proteins TolA, TolQ and TolR, the periplasmic protein TolB and the outer membrane protein Pal. They form a network linking the inner and outer membranes and the peptidoglycan layer.

The protein resides in the periplasm. In terms of biological role, part of the Tol-Pal system, which plays a role in outer membrane invagination during cell division and is important for maintaining outer membrane integrity. The sequence is that of Tol-Pal system protein TolB from Rickettsia akari (strain Hartford).